A 161-amino-acid polypeptide reads, in one-letter code: Putative TRAP transporter small permease protein HI_1030 (161 aa).

4 helical membrane-spanning segments follow: residues 13-33 (LEIL…LNVV), 51-71 (YLFI…NQHV), 86-106 (AILK…IIEG), and 135-155 (IAGI…IFFI).

Belongs to the TRAP transporter small permease family.

It localises to the cell inner membrane. This is Putative TRAP transporter small permease protein HI_1030 from Haemophilus influenzae (strain ATCC 51907 / DSM 11121 / KW20 / Rd).